Reading from the N-terminus, the 430-residue chain is tRNA-2-methylthio-N(6)-dimethylallyladenosine synthase (430 aa).

An MTTase N-terminal domain is found at 1–110 (MKVHIFTYGC…VPDAVLNAKN (110 aa)). [4Fe-4S] cluster contacts are provided by C10, C46, C75, C146, C150, and C153. In terms of domain architecture, Radical SAM core spans 132 to 363 (RSSNHHAWVT…LNLQKTINKE (232 aa)). Positions 366–427 (KSYLGKEVEV…AGPLYGEIKK (62 aa)) constitute a TRAM domain.

Belongs to the methylthiotransferase family. MiaB subfamily. As to quaternary structure, monomer. It depends on [4Fe-4S] cluster as a cofactor.

It localises to the cytoplasm. The enzyme catalyses N(6)-dimethylallyladenosine(37) in tRNA + (sulfur carrier)-SH + AH2 + 2 S-adenosyl-L-methionine = 2-methylsulfanyl-N(6)-dimethylallyladenosine(37) in tRNA + (sulfur carrier)-H + 5'-deoxyadenosine + L-methionine + A + S-adenosyl-L-homocysteine + 2 H(+). Catalyzes the methylthiolation of N6-(dimethylallyl)adenosine (i(6)A), leading to the formation of 2-methylthio-N6-(dimethylallyl)adenosine (ms(2)i(6)A) at position 37 in tRNAs that read codons beginning with uridine. The sequence is that of tRNA-2-methylthio-N(6)-dimethylallyladenosine synthase from Fervidobacterium nodosum (strain ATCC 35602 / DSM 5306 / Rt17-B1).